We begin with the raw amino-acid sequence, 271 residues long: Phosphatidylglycerol--prolipoprotein diacylglyceryl transferase (271 aa).

A run of 7 helical transmembrane segments spans residues 25–45, 60–80, 103–123, 134–154, 181–201, 209–229, and 235–255; these read WYGIMYVIALLLALLLAKFFV, YFIWVEIGVILGARLGYILIY, FVGIRGMSYHGAIIGFLIATL, WIFLDLVALSVPLAYVFGRIG, PSQLYEAFLEGIVVFIIVYLA, GELILVYAGAYSLARFICEFY, and GIGFVLWGMSMGQILSFIMFI. Residue Arg152 participates in a 1,2-diacyl-sn-glycero-3-phospho-(1'-sn-glycerol) binding.

This sequence belongs to the Lgt family.

It is found in the cell inner membrane. The catalysed reaction is L-cysteinyl-[prolipoprotein] + a 1,2-diacyl-sn-glycero-3-phospho-(1'-sn-glycerol) = an S-1,2-diacyl-sn-glyceryl-L-cysteinyl-[prolipoprotein] + sn-glycerol 1-phosphate + H(+). Its pathway is protein modification; lipoprotein biosynthesis (diacylglyceryl transfer). Catalyzes the transfer of the diacylglyceryl group from phosphatidylglycerol to the sulfhydryl group of the N-terminal cysteine of a prolipoprotein, the first step in the formation of mature lipoproteins. The protein is Phosphatidylglycerol--prolipoprotein diacylglyceryl transferase of Campylobacter jejuni subsp. jejuni serotype O:23/36 (strain 81-176).